Reading from the N-terminus, the 545-residue chain is Putative transcription factor ecdB (545 aa).

The zn(2)-C6 fungal-type DNA-binding region spans 12–39 (CDACRSRRVKCDGQRPSCMGCLSRGLDC). The segment at 79-99 (PPPVLLASARPSSNPLSSHED) is disordered.

It localises to the nucleus. In Aspergillus rugulosus (Emericella rugulosa), this protein is Putative transcription factor ecdB.